A 484-amino-acid chain; its full sequence is Probable protein disulfide-isomerase ER-60 (484 aa).

The signal sequence occupies residues 1-14 (MRWLLSCLFLVAFA). Thioredoxin domains are found at residues 15-125 (SCSK…SRAG) and 338-467 (FEDG…REAT). Residues Cys-46, Cys-49, Cys-388, and Cys-391 each act as nucleophile in the active site. 2 disulfide bridges follow: Cys-46–Cys-49 and Cys-388–Cys-391. The short motif at 481 to 484 (KSEL) is the Prevents secretion from ER element.

It belongs to the protein disulfide isomerase family.

It is found in the endoplasmic reticulum lumen. The catalysed reaction is Catalyzes the rearrangement of -S-S- bonds in proteins.. The sequence is that of Probable protein disulfide-isomerase ER-60 from Schistosoma mansoni (Blood fluke).